The following is a 70-amino-acid chain: Putative peptide YY-3 (70 aa).

The N-terminal stretch at 1–23 (MVSVCRPWPAVAIALLALLVCLG) is a signal peptide.

The protein belongs to the NPY family.

The protein localises to the secreted. The sequence is that of Putative peptide YY-3 (PYY3) from Homo sapiens (Human).